A 153-amino-acid chain; its full sequence is Small ribosomal subunit protein uS5c (153 aa).

Residues 11-74 enclose the S5 DRBM domain; it reads WQERVIQIRR…VDAKKQLINI (64 aa).

It belongs to the universal ribosomal protein uS5 family. As to quaternary structure, part of the 30S ribosomal subunit. Contacts protein S4.

The protein localises to the plastid. The protein resides in the chloroplast. Functionally, with S4 and S12 plays an important role in translational accuracy. This chain is Small ribosomal subunit protein uS5c (rps5), found in Cyanidioschyzon merolae (strain NIES-3377 / 10D) (Unicellular red alga).